The primary structure comprises 230 residues: UPF0758 protein Glov_0523 (230 aa).

The MPN domain occupies 108–230; the sequence is RFTSPAQVFD…YFSFVESGLL (123 aa). Residues H179, H181, and D192 each contribute to the Zn(2+) site. A JAMM motif motif is present at residues 179–192; that stretch reads HNHPSGDPAPSRED.

Belongs to the UPF0758 family.

The chain is UPF0758 protein Glov_0523 from Trichlorobacter lovleyi (strain ATCC BAA-1151 / DSM 17278 / SZ) (Geobacter lovleyi).